The chain runs to 237 residues: Casparian strip membrane protein 2 (237 aa).

Residues methionine 1–glycine 48 form a disordered region. Residues methionine 1–cysteine 69 are Cytoplasmic-facing. A helical transmembrane segment spans residues leucine 70–isoleucine 90. Residues serine 91–alanine 117 lie on the Extracellular side of the membrane. Residues phenylalanine 118–phenylalanine 138 traverse the membrane as a helical segment. The Cytoplasmic portion of the chain corresponds to serine 139–lysine 152. The chain crosses the membrane as a helical span at residues leucine 153–alanine 173. Over alanine 174–glycine 205 the chain is Extracellular. Residues alanine 206–phenylalanine 226 traverse the membrane as a helical segment. Topologically, residues threonine 227–serine 237 are cytoplasmic.

The protein belongs to the Casparian strip membrane proteins (CASP) family. As to quaternary structure, homodimer and heterodimers.

It is found in the cell membrane. In terms of biological role, regulates membrane-cell wall junctions and localized cell wall deposition. Required for establishment of the Casparian strip membrane domain (CSD) and the subsequent formation of Casparian strips, a cell wall modification of the root endodermis that determines an apoplastic barrier between the intraorganismal apoplasm and the extraorganismal apoplasm and prevents lateral diffusion. The sequence is that of Casparian strip membrane protein 2 from Oryza sativa subsp. japonica (Rice).